Consider the following 141-residue polypeptide: Nucleoside diphosphate kinase (141 aa).

Residues lysine 11, phenylalanine 59, arginine 87, threonine 93, arginine 104, and asparagine 114 each coordinate ATP. Catalysis depends on histidine 117, which acts as the Pros-phosphohistidine intermediate.

Belongs to the NDK family. As to quaternary structure, homotetramer. Mg(2+) is required as a cofactor.

It localises to the cytoplasm. The catalysed reaction is a 2'-deoxyribonucleoside 5'-diphosphate + ATP = a 2'-deoxyribonucleoside 5'-triphosphate + ADP. It catalyses the reaction a ribonucleoside 5'-diphosphate + ATP = a ribonucleoside 5'-triphosphate + ADP. Functionally, major role in the synthesis of nucleoside triphosphates other than ATP. The ATP gamma phosphate is transferred to the NDP beta phosphate via a ping-pong mechanism, using a phosphorylated active-site intermediate. This Pseudomonas putida (strain ATCC 47054 / DSM 6125 / CFBP 8728 / NCIMB 11950 / KT2440) protein is Nucleoside diphosphate kinase.